Here is a 183-residue protein sequence, read N- to C-terminus: Triggering receptor expressed on myeloid cells 3 (183 aa).

The first 19 residues, 1-19 (MSPLLLWLGLMLCVSGLQA), serve as a signal peptide directing secretion. Residues 20-138 (GDEEEHKCFL…AWCQGKPVMV (119 aa)) are Extracellular-facing. The 99-residue stretch at 30 to 128 (EGENLTLTCP…VIILRQRIRL (99 aa)) folds into the Ig-like V-type domain. Residue Asn33 is glycosylated (N-linked (GlcNAc...) asparagine). Cys38 and Cys110 are joined by a disulfide. The helical transmembrane segment at 139 to 159 (IVLTCGFILNKGLVFSVLFVF) threads the bilayer. Residues 160–183 (LCKAGPKVLQPSKTSKVQGVSEKQ) are Cytoplasmic-facing.

Interacts with TYROBP/DAP12. Expressed in macrophages and in T-cells.

It localises to the cell membrane. Functionally, forms a receptor signaling complex with TYROBP/DAP12 which mediates activation of macrophages as part of the innate immune response. The polypeptide is Triggering receptor expressed on myeloid cells 3 (Mus musculus (Mouse)).